The sequence spans 364 residues: Long-wave-sensitive opsin 1 (364 aa).

At 1 to 52 the chain is on the extracellular side; that stretch reads MAHAWGPQRLAGGQPQANFEESTQGSIFTYTNSNSTRDPFEGPNYHIAPRWV. S22 carries an O-linked (GlcNAc) serine glycan. N34 is a glycosylation site (N-linked (GlcNAc...) asparagine). The helical transmembrane segment at 53–77 threads the bilayer; it reads YHLTSAWMVFVVIASVFTNGLVLAA. Topologically, residues 78-89 are cytoplasmic; the sequence is TMRFKKLRHPLN. Residues 90-115 form a helical membrane-spanning segment; the sequence is WILVNLAIADLAETIIASTISVVNQM. Residues 116–129 are Extracellular-facing; sequence YGYFVLGHPLCVVE. A disulfide bridge links C126 with C203. The helical transmembrane segment at 130–149 threads the bilayer; it reads GYTVSLCGITGLWSLAIISW. The Cytoplasmic segment spans residues 150–168; the sequence is ERWMVVCKPFGNVRFDAKL. Residues 169–192 traverse the membrane as a helical segment; the sequence is AITGIAFSWIWAAVWTAPPIFGWS. Residues 193–218 lie on the Extracellular side of the membrane; the sequence is RYWPHGLKTSCGPDVFSGSSYPGVQS. A helical transmembrane segment spans residues 219-246; it reads YMIVLMITCCFIPLSVIILCYLQVWLAI. Topologically, residues 247–268 are cytoplasmic; sequence RAVAKQQKESESTQKAEKEVTR. Residues 269–292 form a helical membrane-spanning segment; the sequence is MVMVMIFAYCLCWGPYTFFACFAA. At 293–300 the chain is on the extracellular side; that stretch reads AHPGYAFH. A helical membrane pass occupies residues 301–325; the sequence is PLVAALPAYFAKSATIYNPIIYVFM. K312 bears the N6-(retinylidene)lysine mark. The Cytoplasmic segment spans residues 326 to 364; sequence NRQFRNCILQLFGKKVDDSSELSSVSKTEASSVSSVSPA.

This sequence belongs to the G-protein coupled receptor 1 family. Opsin subfamily. In terms of processing, phosphorylated on some or all of the serine and threonine residues present in the C-terminal region. As to expression, expressed in retina (at protein level). Expressed in cone and/or rod photoreceptor cells (at protein level).

Its subcellular location is the membrane. Functionally, visual pigments are the light-absorbing molecules that mediate vision. They consist of an apoprotein, opsin, covalently linked to cis-retinal. The polypeptide is Long-wave-sensitive opsin 1 (OPN1LW) (Bos taurus (Bovine)).